Here is a 209-residue protein sequence, read N- to C-terminus: A-type ATP synthase subunit D (209 aa).

Belongs to the V-ATPase D subunit family. As to quaternary structure, has multiple subunits with at least A(3), B(3), C, D, E, F, H, I and proteolipid K(x).

The protein resides in the cell membrane. Functionally, component of the A-type ATP synthase that produces ATP from ADP in the presence of a proton gradient across the membrane. This Sulfolobus acidocaldarius (strain ATCC 33909 / DSM 639 / JCM 8929 / NBRC 15157 / NCIMB 11770) protein is A-type ATP synthase subunit D.